The following is a 461-amino-acid chain: Kynureninase (461 aa).

Residues Leu-114, Thr-115, 142 to 145, Asp-228, His-231, and Tyr-253 contribute to the pyridoxal 5'-phosphate site; that span reads FPSD. Residue Lys-254 is modified to N6-(pyridoxal phosphate)lysine. The pyridoxal 5'-phosphate site is built by Trp-288 and Asn-316.

This sequence belongs to the kynureninase family. Homodimer. Pyridoxal 5'-phosphate is required as a cofactor.

Its subcellular location is the cytoplasm. The catalysed reaction is L-kynurenine + H2O = anthranilate + L-alanine + H(+). The enzyme catalyses 3-hydroxy-L-kynurenine + H2O = 3-hydroxyanthranilate + L-alanine + H(+). Its pathway is amino-acid degradation; L-kynurenine degradation; L-alanine and anthranilate from L-kynurenine: step 1/1. It functions in the pathway cofactor biosynthesis; NAD(+) biosynthesis; quinolinate from L-kynurenine: step 2/3. Its function is as follows. Catalyzes the cleavage of L-kynurenine (L-Kyn) and L-3-hydroxykynurenine (L-3OHKyn) into anthranilic acid (AA) and 3-hydroxyanthranilic acid (3-OHAA), respectively. In Candida albicans (strain SC5314 / ATCC MYA-2876) (Yeast), this protein is Kynureninase.